Reading from the N-terminus, the 302-residue chain is S-adenosylmethionine sensor upstream of mTORC1 (302 aa).

3 residues coordinate S-adenosyl-L-homocysteine: Arg73, Gly132, and Asp150. Residues Arg73, Gly132, Asp150, Leu151, Asp162, Phe163, and Ser196 each contribute to the S-adenosyl-L-methionine site. 3 residues coordinate S-adenosyl-L-homocysteine: Asp162, Phe163, and Ser196.

This sequence belongs to the BMT2/SAMTOR family.

Its function is as follows. S-adenosyl-L-methionine-binding protein. It is unclear whether this protein acts as a sensor of S-adenosyl-L-methionine to signal methionine sufficiency to mTORC1. Probably acts as a S-adenosyl-L-methionine-dependent methyltransferase. This is S-adenosylmethionine sensor upstream of mTORC1 from Drosophila melanogaster (Fruit fly).